Here is a 66-residue protein sequence, read N- to C-terminus: Ribosome biogenesis protein Nop10 (66 aa).

Belongs to the NOP10 family.

Involved in ribosome biogenesis; more specifically in 18S rRNA pseudouridylation and in cleavage of pre-rRNA. The polypeptide is Ribosome biogenesis protein Nop10 (Staphylothermus marinus (strain ATCC 43588 / DSM 3639 / JCM 9404 / F1)).